The sequence spans 906 residues: Protein translocase subunit SecA (906 aa).

Residues Gln-86, 104–108, and Asp-499 contribute to the ATP site; that span reads GEGKT. The disordered stretch occupies residues 863–885; that stretch reads PVVSRIDPKDRNPDDPTSWGRVS. Zn(2+) is bound by residues Cys-890, Cys-892, Cys-901, and His-902.

Belongs to the SecA family. As to quaternary structure, monomer and homodimer. Part of the essential Sec protein translocation apparatus which comprises SecA, SecYEG and auxiliary proteins SecDF-YajC and YidC. It depends on Zn(2+) as a cofactor.

It localises to the cell inner membrane. The protein resides in the cytoplasm. The catalysed reaction is ATP + H2O + cellular proteinSide 1 = ADP + phosphate + cellular proteinSide 2.. In terms of biological role, part of the Sec protein translocase complex. Interacts with the SecYEG preprotein conducting channel. Has a central role in coupling the hydrolysis of ATP to the transfer of proteins into and across the cell membrane, serving both as a receptor for the preprotein-SecB complex and as an ATP-driven molecular motor driving the stepwise translocation of polypeptide chains across the membrane. In Rickettsia akari (strain Hartford), this protein is Protein translocase subunit SecA.